A 120-amino-acid chain; its full sequence is MERIMFRAKIHRATVTQADLDYVGSVTIDQDLLDAADILVNEKVDIWNITNGNRLHTYALSGPRGSGVIGINGAAAHLMRPGDMVIIAAFGNFSEEEARTLEPKVVLVDAKNRLLELQPV.

Ser-25 acts as the Schiff-base intermediate with substrate; via pyruvic acid in catalysis. Ser-25 carries the pyruvic acid (Ser) modification. Thr-57 contributes to the substrate binding site. Catalysis depends on Tyr-58, which acts as the Proton donor. 73–75 (GAA) lines the substrate pocket.

It belongs to the PanD family. Heterooctamer of four alpha and four beta subunits. It depends on pyruvate as a cofactor. Is synthesized initially as an inactive proenzyme, which is activated by self-cleavage at a specific serine bond to produce a beta-subunit with a hydroxyl group at its C-terminus and an alpha-subunit with a pyruvoyl group at its N-terminus.

The protein resides in the cytoplasm. It catalyses the reaction L-aspartate + H(+) = beta-alanine + CO2. The protein operates within cofactor biosynthesis; (R)-pantothenate biosynthesis; beta-alanine from L-aspartate: step 1/1. Its function is as follows. Catalyzes the pyruvoyl-dependent decarboxylation of aspartate to produce beta-alanine. This chain is Aspartate 1-decarboxylase, found in Deinococcus radiodurans (strain ATCC 13939 / DSM 20539 / JCM 16871 / CCUG 27074 / LMG 4051 / NBRC 15346 / NCIMB 9279 / VKM B-1422 / R1).